Reading from the N-terminus, the 109-residue chain is Large ribosomal subunit protein uL24 (109 aa).

This sequence belongs to the universal ribosomal protein uL24 family. In terms of assembly, part of the 50S ribosomal subunit.

Functionally, one of two assembly initiator proteins, it binds directly to the 5'-end of the 23S rRNA, where it nucleates assembly of the 50S subunit. Its function is as follows. One of the proteins that surrounds the polypeptide exit tunnel on the outside of the subunit. The polypeptide is Large ribosomal subunit protein uL24 (Desulforapulum autotrophicum (strain ATCC 43914 / DSM 3382 / VKM B-1955 / HRM2) (Desulfobacterium autotrophicum)).